Here is a 358-residue protein sequence, read N- to C-terminus: Alanine racemase (358 aa).

Residue lysine 34 is the Proton acceptor; specific for D-alanine of the active site. The residue at position 34 (lysine 34) is an N6-(pyridoxal phosphate)lysine. Arginine 129 lines the substrate pocket. Tyrosine 254 serves as the catalytic Proton acceptor; specific for L-alanine. A substrate-binding site is contributed by methionine 302.

The protein belongs to the alanine racemase family. Pyridoxal 5'-phosphate is required as a cofactor.

It carries out the reaction L-alanine = D-alanine. Its pathway is amino-acid biosynthesis; D-alanine biosynthesis; D-alanine from L-alanine: step 1/1. In terms of biological role, catalyzes the interconversion of L-alanine and D-alanine. May also act on other amino acids. The polypeptide is Alanine racemase (alr) (Aliivibrio salmonicida (strain LFI1238) (Vibrio salmonicida (strain LFI1238))).